A 432-amino-acid polypeptide reads, in one-letter code: Adenosylhomocysteinase (432 aa).

Ser2 carries the N-acetylserine modification. Residues Thr57, Asp131, and Glu156 each contribute to the substrate site. Ser183 bears the Phosphoserine mark. An NAD binding region spans residues 183–350 (SVTKSKFDNL…EGRLVNLGCA (168 aa)). Substrate contacts are provided by Lys186 and Asp190. An N6-(2-hydroxyisobutyryl)lysine modification is found at Lys186. Phosphotyrosine is present on Tyr193.

Belongs to the adenosylhomocysteinase family. Homotetramer. Interaction with AHCYL1. The cofactor is NAD(+).

The protein localises to the cytoplasm. It is found in the melanosome. It localises to the nucleus. Its subcellular location is the endoplasmic reticulum. It catalyses the reaction S-adenosyl-L-homocysteine + H2O = L-homocysteine + adenosine. Its pathway is amino-acid biosynthesis; L-homocysteine biosynthesis; L-homocysteine from S-adenosyl-L-homocysteine: step 1/1. Catalyzes the hydrolysis of S-adenosyl-L-homocysteine to form adenosine and homocysteine. Binds copper ions. The polypeptide is Adenosylhomocysteinase (AHCY) (Sus scrofa (Pig)).